The sequence spans 107 residues: SH3 domain-binding glutamic acid-rich-like protein 2 (107 aa).

An SH3-binding motif is present at residues 61–67 (QGNPLPP).

Belongs to the SH3BGR family.

The protein resides in the nucleus. This Bos taurus (Bovine) protein is SH3 domain-binding glutamic acid-rich-like protein 2 (SH3BGRL2).